The following is a 201-amino-acid chain: Casparian strip membrane protein 4 (201 aa).

Positions M1–A23 are disordered. Topologically, residues M1 to S41 are cytoplasmic. Residues V42–M62 traverse the membrane as a helical segment. Topologically, residues G63 to T87 are extracellular. N66 carries an N-linked (GlcNAc...) asparagine glycan. Residues L88 to L108 form a helical membrane-spanning segment. Topologically, residues S109–R122 are cytoplasmic. The chain crosses the membrane as a helical span at residues L123–S143. The Extracellular segment spans residues A144 to R172. The helical transmembrane segment at I173–L193 threads the bilayer. The Cytoplasmic portion of the chain corresponds to S194–R201.

The protein belongs to the Casparian strip membrane proteins (CASP) family. As to quaternary structure, homodimer and heterodimers.

It is found in the cell membrane. Its function is as follows. Regulates membrane-cell wall junctions and localized cell wall deposition. Required for establishment of the Casparian strip membrane domain (CSD) and the subsequent formation of Casparian strips, a cell wall modification of the root endodermis that determines an apoplastic barrier between the intraorganismal apoplasm and the extraorganismal apoplasm and prevents lateral diffusion. The protein is Casparian strip membrane protein 4 of Oryza sativa subsp. japonica (Rice).